The sequence spans 300 residues: Protoheme IX farnesyltransferase (300 aa).

Transmembrane regions (helical) follow at residues 28 to 48 (VVAL…PTIL), 50 to 70 (VQPL…AAAL), 100 to 120 (ALIF…VFTN), 122 to 142 (LTAW…TAYL), 149 to 169 (NIVI…TAVT), 176 to 196 (ALLL…ALAI), 222 to 242 (CILL…LVGM), 243 to 263 (SGPL…YKAW), and 280 to 300 (FSIY…YLWA).

The protein belongs to the UbiA prenyltransferase family. Protoheme IX farnesyltransferase subfamily.

Its subcellular location is the cell inner membrane. The catalysed reaction is heme b + (2E,6E)-farnesyl diphosphate + H2O = Fe(II)-heme o + diphosphate. It participates in porphyrin-containing compound metabolism; heme O biosynthesis; heme O from protoheme: step 1/1. In terms of biological role, converts heme B (protoheme IX) to heme O by substitution of the vinyl group on carbon 2 of heme B porphyrin ring with a hydroxyethyl farnesyl side group. The sequence is that of Protoheme IX farnesyltransferase from Shewanella oneidensis (strain ATCC 700550 / JCM 31522 / CIP 106686 / LMG 19005 / NCIMB 14063 / MR-1).